The following is a 305-amino-acid chain: U6 small nuclear RNA (adenine-(43)-N(6))-methyltransferase (305 aa).

R85, G110, E133, S164, and N186 together coordinate S-adenosyl-L-methionine. A disordered region spans residues 194 to 217 (SPNPFGGNTRNPQRRPAPNNVRTG).

Belongs to the methyltransferase superfamily. METTL16/RlmF family.

The enzyme catalyses adenosine in U6 snRNA + S-adenosyl-L-methionine = N(6)-methyladenosine in U6 snRNA + S-adenosyl-L-homocysteine + H(+). RNA N6-methyltransferase that mediates N6-methylation of adenine of U6 small nuclear RNA (U6 snRNA). This is U6 small nuclear RNA (adenine-(43)-N(6))-methyltransferase from Drosophila pseudoobscura pseudoobscura (Fruit fly).